The following is a 475-amino-acid chain: Putative response regulator NtrX-like (475 aa).

The 117-residue stretch at 5 to 121 (DVLILDDEES…KLIILLKRAC (117 aa)) folds into the Response regulatory domain. 4-aspartylphosphate is present on D54. A Sigma-54 factor interaction domain is found at 143-369 (LVGGCSVTLK…LRNVVEWTLI (227 aa)). ATP is bound by residues 171–178 (GKVGSGKE) and 232–241 (ANNGTLYIDE).

In terms of biological role, member of the two-component regulatory system RT0550/RT0603. This Rickettsia typhi (strain ATCC VR-144 / Wilmington) protein is Putative response regulator NtrX-like.